We begin with the raw amino-acid sequence, 339 residues long: Putative zinc metalloprotease CA_C1796 (339 aa).

A Zn(2+)-binding site is contributed by histidine 20. Glutamate 21 is an active-site residue. A Zn(2+)-binding site is contributed by histidine 24. The next 3 helical transmembrane spans lie at 91–113, 275–297, and 310–330; these read LSIV…CIVG, QLGV…LFLF, and VGFV…VVTI. The 79-residue stretch at 99–177 folds into the PDZ domain; sequence IMNLILAAVL…GIKLALKNNG (79 aa).

The protein belongs to the peptidase M50B family. Zn(2+) is required as a cofactor.

The protein localises to the cell membrane. The sequence is that of Putative zinc metalloprotease CA_C1796 from Clostridium acetobutylicum (strain ATCC 824 / DSM 792 / JCM 1419 / IAM 19013 / LMG 5710 / NBRC 13948 / NRRL B-527 / VKM B-1787 / 2291 / W).